We begin with the raw amino-acid sequence, 138 residues long: Transposon Tn10 TetD protein (138 aa).

The 99-residue stretch at 31–129 folds into the HTH araC/xylS-type domain; sequence KDVLLWIEHN…KVTPSYYRRN (99 aa). DNA-binding regions (H-T-H motif) lie at residues 48–69 and 96–119; these read DDVANKAGYTKWYFQRLFKKVT and ILEIALKYQFDSQQSFTRRFKYIF.

This chain is Transposon Tn10 TetD protein (tetD), found in Escherichia coli.